The primary structure comprises 89 residues: Small ribosomal subunit protein uS19 (89 aa).

The protein belongs to the universal ribosomal protein uS19 family.

Protein S19 forms a complex with S13 that binds strongly to the 16S ribosomal RNA. The polypeptide is Small ribosomal subunit protein uS19 (Brachyspira hyodysenteriae (strain ATCC 49526 / WA1)).